Consider the following 331-residue polypeptide: Anthranilate phosphoribosyltransferase (331 aa).

5-phospho-alpha-D-ribose 1-diphosphate contacts are provided by residues Gly79, 82 to 83 (GD), Ser87, 89 to 92 (NIST), 107 to 115 (KHCNGNISS), and Ser119. Gly79 provides a ligand contact to anthranilate. Ser91 contributes to the Mg(2+) binding site. Residue Asn110 participates in anthranilate binding. Residue Arg165 coordinates anthranilate. The Mg(2+) site is built by Asp223 and Glu224.

The protein belongs to the anthranilate phosphoribosyltransferase family. As to quaternary structure, homodimer. It depends on Mg(2+) as a cofactor.

It catalyses the reaction N-(5-phospho-beta-D-ribosyl)anthranilate + diphosphate = 5-phospho-alpha-D-ribose 1-diphosphate + anthranilate. The protein operates within amino-acid biosynthesis; L-tryptophan biosynthesis; L-tryptophan from chorismate: step 2/5. Functionally, catalyzes the transfer of the phosphoribosyl group of 5-phosphorylribose-1-pyrophosphate (PRPP) to anthranilate to yield N-(5'-phosphoribosyl)-anthranilate (PRA). This chain is Anthranilate phosphoribosyltransferase, found in Buchnera aphidicola subsp. Baizongia pistaciae (strain Bp).